Consider the following 243-residue polypeptide: uncharacterized protein (243 aa).

The N-terminal stretch at 1 to 19 is a signal peptide; that stretch reads MKSLPLLGILAFAANRLSA. N-linked (GlcNAc...) asparagine glycosylation is found at N112 and N206.

This is an uncharacterized protein from Encephalitozoon cuniculi (strain GB-M1) (Microsporidian parasite).